The chain runs to 593 residues: MESPPLPPACTKQGHQKPLDSKDENPEKHCPLTVNPWHMKKAFKVMNELRSQNLLCDVTIVAEDMEIPAHRVVLAACSPYFHAMFTGEMSESRAKRVRIKEVDGWTLRMLIDYVYTAEIQVTEENVQVLLPAAGLLQLQDVKKTCCEFLESQLHPVNCLGIRAFADMHACTDLLNKANTYAEQHFADVVLSEEFLNLGIEQVCSLISSDKLTISSEEKVFEAVIAWVNHDKDVRQEFMARLMEHVRLPLLPREYLVQRVEEEALVKNSSACKDYLIEAMKYHLLPTEQRMLMKSVRTRLRTPMNLPKLMVVVGGQAPKAIRSVECYDFKEERWHQVAELPSRRCRAGMVYMAGLVFAVGGFNGSLRVRTVDSYDPVKDQWTSVANMRDRRSTLGAAVLNGLLYAVGGFDGSTGLSSVEAYNIKSNEWFHVAPMNTRRSSVGVGVVGGLLYAVGGYDGASRQCLSTVECYNATANEWTYIAEMSTRRSGAGVGVLNNLLYAVGGHDGPLVRKSVEVYDPTTNAWRQVADMNMCRRNAGVCAVNGLLYVVGGDDGSCNLASVEYYNPTTDKWTVVSSCMSTGRSYAGVTVIDKPL.

The disordered stretch occupies residues 1–29; sequence MESPPLPPACTKQGHQKPLDSKDENPEKH. Over residues 17–29 the composition is skewed to basic and acidic residues; it reads KPLDSKDENPEKH. The region spanning 56-123 is the BTB domain; that stretch reads CDVTIVAEDM…VYTAEIQVTE (68 aa). Kelch repeat units lie at residues 308–353, 354–400, 402–447, 449–496, 497–543, and 545–591; these read LMVV…YMAG, LVFA…VLNG, LYAV…VVGG, LYAV…VLNN, LLYA…AVNG, and LYVV…VIDK.

As to quaternary structure, component of the BCR(KLHL2) E3 ubiquitin ligase complex, at least composed of CUL3 and KLHL2 and RBX1. Binds actin. Interacts with KLHL12. Interacts (via N-terminus) with FYN (via SH3 domain). As to expression, detected in brain neurons, oligodendrocytes and astrocytes (at protein level).

It localises to the cytoplasm. The protein resides in the cytoskeleton. The protein localises to the cell projection. It is found in the ruffle. Its subcellular location is the lamellipodium. It localises to the cytosol. Its pathway is protein modification; protein ubiquitination. Its function is as follows. Substrate-specific adapter of a BCR (BTB-CUL3-RBX1) E3 ubiquitin ligase complex that mediates the ubiquitination of target proteins, such as NPTXR, WNK1, WNK3 and WNK4, leading most often to their proteasomal degradation. The BCR(KLHL2) complex catalyzes ubiquitination and degradation of NPTXR. Responsible for degradative ubiquitination of the WNK kinases WNK1, WNK3 and WNK4. Plays a role in the reorganization of the actin cytoskeleton. Promotes growth of cell projections in oligodendrocyte precursors. The polypeptide is Kelch-like protein 2 (Rattus norvegicus (Rat)).